Here is a 271-residue protein sequence, read N- to C-terminus: DNA-directed RNA polymerase subunit Rpo3 (271 aa).

It belongs to the archaeal Rpo3/eukaryotic RPB3 RNA polymerase subunit family. As to quaternary structure, part of the RNA polymerase complex.

It is found in the cytoplasm. It carries out the reaction RNA(n) + a ribonucleoside 5'-triphosphate = RNA(n+1) + diphosphate. Its function is as follows. DNA-dependent RNA polymerase (RNAP) catalyzes the transcription of DNA into RNA using the four ribonucleoside triphosphates as substrates. The protein is DNA-directed RNA polymerase subunit Rpo3 of Thermoplasma volcanium (strain ATCC 51530 / DSM 4299 / JCM 9571 / NBRC 15438 / GSS1).